We begin with the raw amino-acid sequence, 993 residues long: Serine/threonine-protein phosphatase 6 regulatory ankyrin repeat subunit B (993 aa).

28 ANK repeats span residues 7 to 36 (TDQP…DVNT), 40 to 69 (EKRT…RVNA), 73 to 102 (MWLT…DVNA), 106 to 135 (NWQT…SVNV), 139 to 168 (GGRT…NINA), 172 to 201 (KDRR…EVTC), 205 to 234 (KGYT…EIDE), 238 to 267 (YGNT…NVNQ), 271 to 301 (NGFT…DVNI), 305 to 334 (DGKS…EIDC), 338 to 367 (DGNT…DTAK), 371 to 400 (HSMF…EIDT), 404 to 433 (FGRT…DFHK), 437 to 466 (CGRT…NVNE), 470 to 498 (WGRT…DNSE), 531 to 561 (EGYN…GFEE), 566 to 595 (ATKS…DLDI), 599 to 628 (KGRT…SIFV), 633 to 662 (TKRT…NPEA), 669 to 698 (KGQT…NVDT), 702 to 731 (LGCT…SILC), 735 to 764 (RGRT…SEED), 771 to 800 (QGYT…FRKF), 803 to 832 (NPFT…SSIV), 838 to 867 (KGRT…PVNA), 871 to 901 (SGKT…DLTV), 905 to 934 (DLNT…DESL), and 941 to 970 (ALQT…CVLA).

As to quaternary structure, protein phosphatase 6 (PP6) holoenzyme is proposed to be a heterotrimeric complex formed by the catalytic subunit, a SAPS domain-containing subunit (PP6R) and an ankyrin repeat-domain containing regulatory subunit (ARS). Interacts with PPP6R1.

Functionally, putative regulatory subunit of protein phosphatase 6 (PP6) that may be involved in the recognition of phosphoprotein substrates. This chain is Serine/threonine-protein phosphatase 6 regulatory ankyrin repeat subunit B (ANKRD44), found in Homo sapiens (Human).